The sequence spans 112 residues: MSAESPEPASAEEQKEMEDKVLSPEKAEEAKLKARYPHLGQKPGGSDFLRKRLQKGQKYFDSGDYNMAKAKMKNKQLPTAAPDKTEVTGDHIPTPQDLPQRKPSLVASKLAG.

Positions 1–11 (MSAESPEPASA) are enriched in low complexity. The interval 1-49 (MSAESPEPASAEEQKEMEDKVLSPEKAEEAKLKARYPHLGQKPGGSDFL) is disordered. The span at 12–32 (EEQKEMEDKVLSPEKAEEAKL) shows a compositional bias: basic and acidic residues. 2 positions are modified to phosphoserine; by GWL: Ser62 and Ser104. The disordered stretch occupies residues 72–112 (MKNKQLPTAAPDKTEVTGDHIPTPQDLPQRKPSLVASKLAG). At Ser104 the chain carries Phosphoserine; by PKA.

Belongs to the endosulfine family. Interacts (when phosphorylated at Ser-62) with PPP2R2D. In terms of processing, phosphorylation at Ser-62 by MASTL/GWL during mitosis is essential for interaction with PPP2R2D (PR55-delta) and subsequent inactivation of PP2A.

The protein resides in the cytoplasm. Functionally, protein phosphatase inhibitor that specifically inhibits protein phosphatase 2A (PP2A) during mitosis. Inhibition of PP2A is enhanced when ARPP19 is phosphorylated. When phosphorylated at Ser-62 during mitosis, specifically interacts with PPP2R2D (PR55-delta) and inhibits its activity, leading to inactivation of PP2A, an essential condition to keep cyclin-B1-CDK1 activity high during M phase. The protein is cAMP-regulated phosphoprotein 19 (ARPP19) of Taeniopygia guttata (Zebra finch).